The sequence spans 553 residues: Arginine--tRNA ligase (553 aa).

Positions 130-140 match the 'HIGH' region motif; the sequence is ANPTGDLHIGH.

Belongs to the class-I aminoacyl-tRNA synthetase family. Monomer.

The protein resides in the cytoplasm. The enzyme catalyses tRNA(Arg) + L-arginine + ATP = L-arginyl-tRNA(Arg) + AMP + diphosphate. This Staphylococcus aureus (strain bovine RF122 / ET3-1) protein is Arginine--tRNA ligase.